Here is a 2481-residue protein sequence, read N- to C-terminus: Tetratricopeptide repeat protein 28 (2481 aa).

At methionine 1 the chain carries N-acetylmethionine. Residues 1 to 14 (MEQSPPPAPEPTQG) show a composition bias toward pro residues. Residues 1–48 (MEQSPPPAPEPTQGPTPARSRRRREPESPPASAPIPLFGADTIGQRSP) are disordered. The residue at position 28 (serine 28) is a Phosphoserine. TPR repeat units lie at residues 58–91 (FVEK…DPQN), 93–125 (ILYS…NPKW), 126–159 (PKAY…DPKS), 196–229 (FVVV…GTCS), 234–267 (GSVF…AKTL), 274–307 (CRAH…AMKL), 314–347 (SSAL…AKQS), 354–387 (AREL…AKDL), 394–427 (ARAY…AQEL), 434–467 (MRAY…AEDL), 474–507 (GRAS…AQEL), 514–547 (GRAY…SMEV), 554–587 (ASTH…AREL), 594–627 (ARAL…APDL), 634–667 (GKVC…AKDL), 674–707 (AKAY…AQSL), 714–747 (FRAL…AHQV), 754–787 (ASAY…YQEL), 794–827 (CRAH…GQKL), 834–867 (AQVY…LQQL), 877–910 (GRAY…AQSL), 917–950 (AKAY…AHEL), 957–990 (AQAY…ARDM), 997–1030 (SDAA…AEET), 1037–1070 (GRAY…AAQM), 1077–1110 (TVSY…AEQL), 1117–1150 (AKIR…FETI), and 1169–1202 (TSSY…AFAD). A Phosphoserine modification is found at serine 1590. Disordered stretches follow at residues 2004 to 2055 (FVSK…DEEE), 2075 to 2161 (NTCF…DPQE), and 2176 to 2339 (AVER…PADA). Polar residues-rich tracts occupy residues 2029–2043 (AYLQ…QLPP) and 2096–2122 (SVSS…NSPF). Serine 2104 is subject to Phosphoserine. The span at 2130 to 2146 (SSDTGESDQSSTETDST) shows a compositional bias: low complexity. Positions 2149-2159 (SQEESNPKLDP) are enriched in basic and acidic residues. The segment covering 2183 to 2214 (SGGQVSKSNNPEDGVQAPSSTAVFRASETSAF) has biased composition (polar residues). Phosphoserine occurs at positions 2224 and 2251. Polar residues predominate over residues 2238–2282 (RSSSLPKVSSGYSSPTTSEMSIKDSPSQHSGRPSPGCDSQTSQLD). Residues 2307-2339 (SPSSGHQSPAGSAPSPALSYSSAGSARSSPADA) show a composition bias toward low complexity. A phosphoserine mark is found at serine 2393 and serine 2398. The interval 2420–2467 (QHDGAPPKAPPNGHWRTETTSLGSLPLPAGPPATAPARPLRLPSGNGY) is disordered.

In terms of assembly, interacts with AURKB. Widely expressed in fetal tissues. In adult tissues, expressed in testis and ovary and, at much lower levels, in kidney and pancreas.

It is found in the cytoplasm. The protein localises to the cytoskeleton. It localises to the microtubule organizing center. Its subcellular location is the centrosome. The protein resides in the spindle. It is found in the spindle pole. The protein localises to the midbody. During mitosis, may be involved in the condensation of spindle midzone microtubules, leading to the formation of midbody. The chain is Tetratricopeptide repeat protein 28 (TTC28) from Homo sapiens (Human).